We begin with the raw amino-acid sequence, 197 residues long: Imidazoleglycerol-phosphate dehydratase (197 aa).

The protein belongs to the imidazoleglycerol-phosphate dehydratase family.

Its subcellular location is the cytoplasm. It catalyses the reaction D-erythro-1-(imidazol-4-yl)glycerol 3-phosphate = 3-(imidazol-4-yl)-2-oxopropyl phosphate + H2O. It participates in amino-acid biosynthesis; L-histidine biosynthesis; L-histidine from 5-phospho-alpha-D-ribose 1-diphosphate: step 6/9. This chain is Imidazoleglycerol-phosphate dehydratase, found in Bradyrhizobium sp. (strain BTAi1 / ATCC BAA-1182).